The sequence spans 101 residues: MEPVDPRLEPWNHPGSQPKTACNNCYCKRCCYHCLYCFTKKGLGISYGRKKRSQRRRTPQSSKSHQDLIPEQPLSQQQGDQTGQKKQKEALESKTEADPCD.

A compositionally biased stretch (basic and acidic residues) spans 1 to 10; it reads MEPVDPRLEP. Residues 1-20 are disordered; it reads MEPVDPRLEPWNHPGSQPKT. Residues 1-24 form an interaction with human CREBBP region; the sequence is MEPVDPRLEPWNHPGSQPKTACNN. Residues 1 to 48 form a transactivation region; it reads MEPVDPRLEPWNHPGSQPKTACNNCYCKRCCYHCLYCFTKKGLGISYG. The Zn(2+) site is built by cysteine 22, cysteine 25, and cysteine 27. Residues 22-37 form a cysteine-rich region; sequence CNNCYCKRCCYHCLYC. Residue lysine 28 is modified to N6-acetyllysine; by host PCAF. Residues cysteine 30, histidine 33, cysteine 34, and cysteine 37 each coordinate Zn(2+). The segment at 38 to 48 is core; sequence FTKKGLGISYG. Basic residues predominate over residues 48–58; that stretch reads GRKKRSQRRRT. Residues 48-101 form a disordered region; it reads GRKKRSQRRRTPQSSKSHQDLIPEQPLSQQQGDQTGQKKQKEALESKTEADPCD. The Nuclear localization signal, RNA-binding (TAR), and protein transduction signature appears at 49–57; it reads RKKRSQRRR. An interaction with the host capping enzyme RNGTT region spans residues 49-86; the sequence is RKKRSQRRRTPQSSKSHQDLIPEQPLSQQQGDQTGQKK. N6-acetyllysine; by host EP300 and GCN5L2 is present on residues lysine 50 and lysine 51. Position 52 is an asymmetric dimethylarginine; by host PRMT6 (arginine 52). Residues 86–101 are compositionally biased toward basic and acidic residues; the sequence is KQKEALESKTEADPCD.

Belongs to the lentiviruses Tat family. As to quaternary structure, interacts with host CCNT1. Associates with the P-TEFb complex composed at least of Tat, P-TEFb (CDK9 and CCNT1), TAR RNA, RNA Pol II. Recruits the HATs CREBBP, TAF1/TFIID, EP300, PCAF and GCN5L2. Interacts with host KAT5/Tip60; this interaction targets the latter to degradation. Interacts with the host deacetylase SIRT1. Interacts with host capping enzyme RNGTT; this interaction stimulates RNGTT. Binds to host KDR, and to the host integrins ITGAV/ITGB3 and ITGA5/ITGB1. Interacts with host KPNB1/importin beta-1 without previous binding to KPNA1/importin alpha-1. Interacts with EIF2AK2. Interacts with host nucleosome assembly protein NAP1L1; this interaction may be required for the transport of Tat within the nucleus, since the two proteins interact at the nuclear rim. Interacts with host C1QBP/SF2P32; this interaction involves lysine-acetylated Tat. Interacts with the host chemokine receptors CCR2, CCR3 and CXCR4. Interacts with host DPP4/CD26; this interaction may trigger an anti-proliferative effect. Interacts with host LDLR. Interacts with the host extracellular matrix metalloproteinase MMP1. Interacts with host PRMT6; this interaction mediates Tat's methylation. Interacts with, and is ubiquitinated by MDM2/Hdm2. Interacts with host PSMC3 and HTATIP2. Interacts with STAB1; this interaction may overcome SATB1-mediated repression of IL2 and IL2RA (interleukin) in T cells by binding to the same domain than HDAC1. Interacts (when acetylated) with human CDK13, thereby increasing HIV-1 mRNA splicing and promoting the production of the doubly spliced HIV-1 protein Nef. Interacts with host TBP; this interaction modulates the activity of transcriptional pre-initiation complex. Interacts with host RELA. Interacts with host PLSCR1; this interaction negatively regulates Tat transactivation activity by altering its subcellular distribution. Post-translationally, asymmetrical arginine methylation by host PRMT6 seems to diminish the transactivation capacity of Tat and affects the interaction with host CCNT1. Acetylation by EP300, CREBBP, GCN5L2/GCN5 and PCAF regulates the transactivation activity of Tat. EP300-mediated acetylation of Lys-50 promotes dissociation of Tat from the TAR RNA through the competitive binding to PCAF's bromodomain. In addition, the non-acetylated Tat's N-terminus can also interact with PCAF. PCAF-mediated acetylation of Lys-28 enhances Tat's binding to CCNT1. Lys-50 is deacetylated by SIRT1. In terms of processing, polyubiquitination by host MDM2 does not target Tat to degradation, but activates its transactivation function and fosters interaction with CCNT1 and TAR RNA. Post-translationally, phosphorylated by EIF2AK2 on serine and threonine residues adjacent to the basic region important for TAR RNA binding and function. Phosphorylation of Tat by EIF2AK2 is dependent on the prior activation of EIF2AK2 by dsRNA.

It is found in the host nucleus. The protein resides in the host nucleolus. It localises to the host cytoplasm. The protein localises to the secreted. Transcriptional activator that increases RNA Pol II processivity, thereby increasing the level of full-length viral transcripts. Recognizes a hairpin structure at the 5'-LTR of the nascent viral mRNAs referred to as the transactivation responsive RNA element (TAR) and recruits the cyclin T1-CDK9 complex (P-TEFb complex) that will in turn hyperphosphorylate the RNA polymerase II to allow efficient elongation. The CDK9 component of P-TEFb and other Tat-activated kinases hyperphosphorylate the C-terminus of RNA Pol II that becomes stabilized and much more processive. Other factors such as HTATSF1/Tat-SF1, SUPT5H/SPT5, and HTATIP2 are also important for Tat's function. Besides its effect on RNA Pol II processivity, Tat induces chromatin remodeling of proviral genes by recruiting the histone acetyltransferases (HATs) CREBBP, EP300 and PCAF to the chromatin. This also contributes to the increase in proviral transcription rate, especially when the provirus integrates in transcriptionally silent region of the host genome. To ensure maximal activation of the LTR, Tat mediates nuclear translocation of NF-kappa-B by interacting with host RELA. Through its interaction with host TBP, Tat may also modulate transcription initiation. Tat can reactivate a latently infected cell by penetrating in it and transactivating its LTR promoter. In the cytoplasm, Tat is thought to act as a translational activator of HIV-1 mRNAs. Its function is as follows. Extracellular circulating Tat can be endocytosed by surrounding uninfected cells via the binding to several surface receptors such as CD26, CXCR4, heparan sulfate proteoglycans (HSPG) or LDLR. Neurons are rarely infected, but they internalize Tat via their LDLR. Through its interaction with nuclear HATs, Tat is potentially able to control the acetylation-dependent cellular gene expression. Modulates the expression of many cellular genes involved in cell survival, proliferation or in coding for cytokines or cytokine receptors. Tat plays a role in T-cell and neurons apoptosis. Tat induced neurotoxicity and apoptosis probably contribute to neuroAIDS. Circulating Tat also acts as a chemokine-like and/or growth factor-like molecule that binds to specific receptors on the surface of the cells, affecting many cellular pathways. In the vascular system, Tat binds to ITGAV/ITGB3 and ITGA5/ITGB1 integrins dimers at the surface of endothelial cells and competes with bFGF for heparin-binding sites, leading to an excess of soluble bFGF. The polypeptide is Protein Tat (Homo sapiens (Human)).